Consider the following 1909-residue polypeptide: Plexin-B3 (1909 aa).

The first 44 residues, 1 to 44 (MCHAAQETPLLHHFMAPVMARWPPFGLCLLLLLLSPPPLPLTGA), serve as a signal peptide directing secretion. Residues 45–471 (HRFSAPNTTL…TAHQVDRIPV (427 aa)) form the Sema domain. Over 45–1255 (HRFSAPNTTL…PLSAFPVEAQ (1211 aa)) the chain is Extracellular. N-linked (GlcNAc...) asparagine glycosylation occurs at Asn51. 2 cysteine pairs are disulfide-bonded: Cys98-Cys107 and Cys132-Cys140. The N-linked (GlcNAc...) asparagine glycan is linked to Asn231. 8 disulfides stabilise this stretch: Cys267–Cys370, Cys283–Cys315, Cys333–Cys357, Cys474–Cys491, Cys480–Cys525, Cys483–Cys500, Cys494–Cys506, and Cys562–Cys580. In terms of domain architecture, PSI 1 spans 473 to 526 (ACPQFPDCASCLQAQDPLCGWCVLQGRCTRKGQCGRAGQLNQWLWSYEEDSHCL). N-linked (GlcNAc...) asparagine glycosylation occurs at Asn615. PSI domains are found at residues 620–682 (DCSA…GACP) and 787–833 (DCAM…LLCP). N-linked (GlcNAc...) asparagine glycans are attached at residues Asn802, Asn900, Asn957, Asn1101, and Asn1218. 4 IPT/TIG domains span residues 835–925 (PSID…FTYQ), 927–1012 (PVLL…FRYT), 1015–1145 (PQLV…FLYQ), and 1159–1244 (ARPY…YEAE). Residues 1256-1276 (AGVGMGAAVLIAAVLLLTLMY) traverse the membrane as a helical segment. Topologically, residues 1277–1909 (RHKSKQALRD…ALVENKVTDL (633 aa)) are cytoplasmic.

It belongs to the plexin family. As to quaternary structure, interacts (via cytoplasmic domain) with RAC1 and ARHGDIA. Binds MET and MST1R. Interacts (via cytoplasmic domain) with FSCN1. Interacts with RIT2/RIN. May form homodimers (via Sema domain). In terms of tissue distribution, expression detected in Purkinje and granular cells in cerebellum, and in brain neocortex but not in corpus callosum. Expressed in glioma cells and embryonic kidney cells (at protein level). Expressed in brain, liver, pancreas and placenta, with weak expression detected also in lung and kidney. Expressed in several glioma cell lines.

It localises to the cell membrane. In terms of biological role, receptor for SEMA5A that plays a role in axon guidance, invasive growth and cell migration. Stimulates neurite outgrowth and mediates Ca(2+)/Mg(2+)-dependent cell aggregation. In glioma cells, SEMA5A stimulation of PLXNB3 results in the disassembly of F-actin stress fibers, disruption of focal adhesions and cellular collapse as well as inhibition of cell migration and invasion through ARHGDIA-mediated inactivation of RAC1. In Homo sapiens (Human), this protein is Plexin-B3 (PLXNB3).